The following is a 280-amino-acid chain: Tryptophan synthase alpha chain (280 aa).

Catalysis depends on proton acceptor residues Glu-49 and Asp-60.

This sequence belongs to the TrpA family. In terms of assembly, tetramer of two alpha and two beta chains.

The catalysed reaction is (1S,2R)-1-C-(indol-3-yl)glycerol 3-phosphate + L-serine = D-glyceraldehyde 3-phosphate + L-tryptophan + H2O. The protein operates within amino-acid biosynthesis; L-tryptophan biosynthesis; L-tryptophan from chorismate: step 5/5. Its function is as follows. The alpha subunit is responsible for the aldol cleavage of indoleglycerol phosphate to indole and glyceraldehyde 3-phosphate. The polypeptide is Tryptophan synthase alpha chain (Corynebacterium efficiens (strain DSM 44549 / YS-314 / AJ 12310 / JCM 11189 / NBRC 100395)).